Consider the following 341-residue polypeptide: Transmembrane protein 120A-A (341 aa).

The Cytoplasmic segment spans residues 1–131; that stretch reads MLFNPTGLTE…KQSKFAYKDE (131 aa). K129 serves as a coordination point for CoA. A helical membrane pass occupies residues 132–151; sequence YEKFKLYLTVLLLFFSFTCR. Over 152–157 the chain is Extracellular; that stretch reads FLVSYR. A helical transmembrane segment spans residues 158–176; it reads VVDALFNFLLVWYYCTLTI. Topologically, residues 177–189 are cytoplasmic; the sequence is RESILINNGSKIK. 2 residues coordinate CoA: S186 and K187. Residues 190 to 208 form a helical membrane-spanning segment; it reads GWWVFQHYVSTFLSGVMLT. The Extracellular portion of the chain corresponds to 209–217; it reads WPDGELYQM. A helical transmembrane segment spans residues 218-239; the sequence is FRNQFLSYSMYINFVQFFQYYY. The CoA site is built by Q236, Y239, Q240, and H282. Residues 240–269 lie on the Cytoplasmic side of the membrane; that stretch reads QSGCLYRLRALGERHNMDLTVEGFQSWMWR. A helical transmembrane segment spans residues 270–293; it reads GLTFLLPFLFLGHFFQLYNGITLF. The Extracellular segment spans residues 294-303; sequence QMTQLPEWKE. A helical membrane pass occupies residues 304–329; it reads WQVLMCGSTFLVLFMGNFFTTLGVVY. The Cytoplasmic portion of the chain corresponds to 330–341; it reads HKYMDQDKAKGL. K331 provides a ligand contact to CoA.

It belongs to the TMEM120 family. In terms of assembly, homodimer.

Its subcellular location is the cell membrane. The protein resides in the nucleus inner membrane. It localises to the endoplasmic reticulum. Functionally, multifunctional protein involved in mechanosensation, and plays an essential role in lipid metabolism. May function as a potential ion channel involved in sensing mechanical stimuli. TMEM120A is structurally similar to a lipid-modifying enzyme, ELOVL7, and contains a bound coenzyme A molecule, which suggests it might function as an enzyme in lipid metabolism. The polypeptide is Transmembrane protein 120A-A (tmem120aa) (Danio rerio (Zebrafish)).